A 76-amino-acid chain; its full sequence is Histone H2A (76 aa).

The disordered stretch occupies residues 1 to 23; the sequence is MSGRGKTGGKARAKAKTRSSRAG. The residue at position 2 (Ser-2) is an N-acetylserine; in acipensins. Position 2 is an N-acetylserine; in histone H2A (Ser-2). Phosphoserine; in histone H2A is present on Ser-2. Lys-6 carries the N6-(2-hydroxyisobutyryl)lysine modification. The residue at position 6 (Lys-6) is an N6-acetyllysine; in histone H2A. Over residues 7 to 19 the composition is skewed to basic residues; the sequence is TGGKARAKAKTRS. Lys-10 is modified (N6-(2-hydroxyisobutyryl)lysine; alternate). Lys-10 carries the post-translational modification N6-lactoyllysine; alternate. Lys-10 bears the N6-succinyllysine mark. Glycyl lysine isopeptide (Lys-Gly) (interchain with G-Cter in ubiquitin); in histone H2A cross-links involve residues Lys-14 and Lys-16. Lys-37 carries the N6-(2-hydroxyisobutyryl)lysine; alternate modification. 2 positions are modified to N6-(2-hydroxyisobutyryl)lysine: Lys-65 and Lys-66.

Belongs to the histone H2A family. In terms of assembly, the nucleosome is a histone octamer containing two molecules each of H2A, H2B, H3 and H4 assembled in one H3-H4 heterotetramer and two H2A-H2B heterodimers. The octamer wraps approximately 147 bp of DNA. Phosphorylation on Ser-2 is enhanced during mitosis. Phosphorylation on Ser-2 directly represses transcription.

The protein localises to the nucleus. It localises to the chromosome. Core component of nucleosome. Nucleosomes wrap and compact DNA into chromatin, limiting DNA accessibility to the cellular machineries which require DNA as a template. Histones thereby play a central role in transcription regulation, DNA repair, DNA replication and chromosomal stability. DNA accessibility is regulated via a complex set of post-translational modifications of histones, also called histone code, and nucleosome remodeling. Its function is as follows. Acipensins are antimicrobial peptides. Acipensins 1 and 2 have antibacterial activity against Gram-positive bacteria L.monocytogenes EGD (MIC are 1.1 uM and 1.0 uM, respectively) and S.aureus ATCC 33591 (MIC are 0.9 uM and 0.6 uM, respectively), against Gram-negative bacterium E.coli ML-35p (MIC are 0.7 uM and 0.3 uM, respectively) and antifungal activity against C.albicans 820 (MIC are 1.0 uM and 0.9 uM, respectively). Acipensin 6 has antibacterial activity against Gram-negative bacterium E.coli ML-35p (MIC=2.5 uM). Antimicrobial activity is reduced by high ionic strength. Acipensins 1, 2 and 6 have no hemolytic (up to 40 uM) or cytotoxic (up to 20 uM) effects on human cells in vitro. The chain is Histone H2A from Acipenser gueldenstaedtii (Russian sturgeon).